The chain runs to 312 residues: 4-hydroxyproline 2-epimerase (312 aa).

Cysteine 88 functions as the Proton acceptor in the catalytic mechanism. Residues 89-90 (GH), histidine 208, and aspartate 234 contribute to the substrate site. The Proton donor role is filled by cysteine 238. 239–240 (GT) serves as a coordination point for substrate.

This sequence belongs to the proline racemase family.

The catalysed reaction is trans-4-hydroxy-L-proline = cis-4-hydroxy-D-proline. In terms of biological role, catalyzes the epimerization of trans-4-hydroxy-L-proline (t4LHyp) to cis-4-hydroxy-D-proline (c4DHyp). Is likely involved in a degradation pathway that converts t4LHyp to alpha-ketoglutarate. Can also catalyze the epimerization of trans-3-hydroxy-L-proline (t3LHyp) to cis-3-hydroxy-D-proline (c3DHyp), albeit with 500-fold lower efficiency. Displays no proline racemase activity. In Xanthomonas campestris pv. campestris (strain ATCC 33913 / DSM 3586 / NCPPB 528 / LMG 568 / P 25), this protein is 4-hydroxyproline 2-epimerase.